A 637-amino-acid chain; its full sequence is Clathrin coat assembly protein AP180A (637 aa).

One can recognise an ENTH domain in the interval 1–126 (MTTYFKLVKG…REFGKIKKDY (126 aa)). Residues 555–637 (TQNHLQQQQQ…YANNLNLIDM (83 aa)) are disordered. 2 stretches are compositionally biased toward low complexity: residues 560–579 (QQQQ…QPQQ) and 600–622 (QPQN…TQQP). The segment at 587 to 637 (AGANPVTNITGTVQPQNFPFYPQQQPQPEQSQTQQPVLGNQYANNLNLIDM) is clathrin-binding. Residues 623-637 (VLGNQYANNLNLIDM) show a composition bias toward polar residues.

It belongs to the AP180 family. Interacts with PAN1 and the clathrin heavy and light chains CHC1 and CLC1.

The protein localises to the bud. It is found in the bud neck. Its subcellular location is the cell membrane. The protein resides in the cytoplasm. Functionally, involved in endocytosis and clathrin cage assembly. This Saccharomyces cerevisiae (strain ATCC 204508 / S288c) (Baker's yeast) protein is Clathrin coat assembly protein AP180A (YAP1801).